The primary structure comprises 215 residues: Polysialic acid O-acetyltransferase (215 aa).

Residues 119-121 (DMH), Arg-148, Lys-154, Ser-166, 171-172 (YK), and Lys-190 each bind acetyl-CoA.

It belongs to the transferase hexapeptide repeat family. As to quaternary structure, homotrimer.

The catalysed reaction is [(2-&gt;6)-alpha-D-glucosyl-(1-&gt;4)-N-acetyl-alpha-D-neuraminosyl](n) + n acetyl-CoA = [(2-&gt;6)-alpha-D-glucosyl-(1-&gt;4)-N,7-O-diacetyl-alpha-D-neuraminosyl](n) + n CoA. It carries out the reaction [(2-&gt;6)-alpha-D-glucosyl-(1-&gt;4)-N-acetyl-alpha-D-neuraminosyl](n) + n acetyl-CoA = [(2-&gt;6)-alpha-D-glucosyl-(1-&gt;4)-N,O(9)-diacetyl-alpha-D-neuraminosyl](n) + n CoA. Catalyzes the O-acetylation of capsular polymeric sialic acid consisting of polymers of (2-&gt;6)-alpha-D-glucosyl-(1-&gt;4)-N-acetyl-alpha-D-neuraminosyl residues. Shows high substrate specificity toward polymers of sialic acid that contains a large number of residues. The sequence is that of Polysialic acid O-acetyltransferase from Neisseria meningitidis.